The chain runs to 234 residues: Leucyl/phenylalanyl-tRNA--protein transferase (234 aa).

This sequence belongs to the L/F-transferase family.

Its subcellular location is the cytoplasm. It catalyses the reaction N-terminal L-lysyl-[protein] + L-leucyl-tRNA(Leu) = N-terminal L-leucyl-L-lysyl-[protein] + tRNA(Leu) + H(+). The catalysed reaction is N-terminal L-arginyl-[protein] + L-leucyl-tRNA(Leu) = N-terminal L-leucyl-L-arginyl-[protein] + tRNA(Leu) + H(+). It carries out the reaction L-phenylalanyl-tRNA(Phe) + an N-terminal L-alpha-aminoacyl-[protein] = an N-terminal L-phenylalanyl-L-alpha-aminoacyl-[protein] + tRNA(Phe). Its function is as follows. Functions in the N-end rule pathway of protein degradation where it conjugates Leu, Phe and, less efficiently, Met from aminoacyl-tRNAs to the N-termini of proteins containing an N-terminal arginine or lysine. In Shigella boydii serotype 18 (strain CDC 3083-94 / BS512), this protein is Leucyl/phenylalanyl-tRNA--protein transferase.